Consider the following 102-residue polypeptide: A-type ATP synthase subunit F (102 aa).

Belongs to the V-ATPase F subunit family. As to quaternary structure, has multiple subunits with at least A(3), B(3), C, D, E, F, H, I and proteolipid K(x).

It is found in the cell membrane. Its function is as follows. Component of the A-type ATP synthase that produces ATP from ADP in the presence of a proton gradient across the membrane. The polypeptide is A-type ATP synthase subunit F (Thermococcus onnurineus (strain NA1)).